A 440-amino-acid chain; its full sequence is Thymidine phosphorylase (440 aa).

The protein belongs to the thymidine/pyrimidine-nucleoside phosphorylase family. As to quaternary structure, homodimer.

The enzyme catalyses thymidine + phosphate = 2-deoxy-alpha-D-ribose 1-phosphate + thymine. The protein operates within pyrimidine metabolism; dTMP biosynthesis via salvage pathway; dTMP from thymine: step 1/2. The enzymes which catalyze the reversible phosphorolysis of pyrimidine nucleosides are involved in the degradation of these compounds and in their utilization as carbon and energy sources, or in the rescue of pyrimidine bases for nucleotide synthesis. This is Thymidine phosphorylase from Proteus mirabilis (strain HI4320).